A 155-amino-acid polypeptide reads, in one-letter code: MSVMKEFKEFAVKGNVVDMAVGIIIGGAFGAIVNNLVSQVILPPLGLLIGGVDFSSLYIILKEGATQAAPYNSLAEATAAGAVTLNYGVFLNSVFSFVIMAFAVFLLVKSINMLRRTEGSKSAVPAPSTTKECPYCLSSVPLKATRCPQCTSELK.

3 consecutive transmembrane segments (helical) span residues 16–36, 40–60, and 88–108; these read VVDM…VNNL, VILP…LYII, and GVFL…FLLV.

It belongs to the MscL family. In terms of assembly, homopentamer.

It is found in the cell inner membrane. In terms of biological role, channel that opens in response to stretch forces in the membrane lipid bilayer. May participate in the regulation of osmotic pressure changes within the cell. The polypeptide is Large-conductance mechanosensitive channel (Chlorobium chlorochromatii (strain CaD3)).